Consider the following 131-residue polypeptide: Large ribosomal subunit protein bL17 (131 aa).

The protein belongs to the bacterial ribosomal protein bL17 family. As to quaternary structure, part of the 50S ribosomal subunit. Contacts protein L32.

This Bordetella petrii (strain ATCC BAA-461 / DSM 12804 / CCUG 43448) protein is Large ribosomal subunit protein bL17.